The following is a 973-amino-acid chain: Ras-related protein Rab-44 (973 aa).

Residues 1–21 (MEKGKGVSRKGRKLASSRRRQ) are compositionally biased toward basic residues. Residues 1–42 (MEKGKGVSRKGRKLASSRRRQAREPADGQDAPVAAEAESWPS) are disordered. The 35-residue stretch at 77 to 111 (GGEEPQMIFDWVDVESRGHLSLEEFSSGLKNVFGS) folds into the EF-hand domain. The disordered stretch occupies residues 112-140 (SPGTHRLRTKRSLPSQRESVTSTLPVPEE). A compositionally biased stretch (polar residues) spans 123–135 (SLPSQRESVTSTL). The stretch at 219-310 (LYKVRQLYEE…ERDLAGQLEE (92 aa)) forms a coiled coil. Disordered regions lie at residues 319–368 (RGHL…FGNN), 421–481 (FSQE…GSFL), 493–708 (GTVE…GLAV), and 724–779 (EAQP…GKPQ). A compositionally biased stretch (pro residues) spans 428–440 (DPDPGPRGSPEVP). Residues 445-457 (KDGKGVEDPKGQD) show a composition bias toward basic and acidic residues. The segment covering 513 to 524 (GLSSSPQSPAGS) has biased composition (low complexity). Basic and acidic residues-rich tracts occupy residues 548 to 559 (SLEREVMAEDLK), 598 to 608 (HLARQESHAKG), and 654 to 663 (SESHGLEARS). Positions 665–680 (ESPQQDDPLPNTSQPP) are enriched in polar residues. Positions 750 to 766 (AESRPEDPRTDLQEAER) are enriched in basic and acidic residues. Residues 792–799 (GDSNVGKT), 840–844 (DTAGQ), and 898–901 (NKMD) each bind GTP. 2 S-geranylgeranyl cysteine lipidation sites follow: C971 and C972.

Belongs to the small GTPase superfamily. Rab family.

It is found in the cell membrane. The polypeptide is Ras-related protein Rab-44 (Rab44) (Mus musculus (Mouse)).